The sequence spans 541 residues: Chaperonin GroEL (541 aa).

Residues 29–32 (TLGP), 86–90 (DGTTT), G413, 477–479 (DAL), and D493 contribute to the ATP site.

It belongs to the chaperonin (HSP60) family. In terms of assembly, forms a cylinder of 14 subunits composed of two heptameric rings stacked back-to-back. Interacts with the co-chaperonin GroES.

The protein resides in the cytoplasm. It carries out the reaction ATP + H2O + a folded polypeptide = ADP + phosphate + an unfolded polypeptide.. Its function is as follows. Together with its co-chaperonin GroES, plays an essential role in assisting protein folding. The GroEL-GroES system forms a nano-cage that allows encapsulation of the non-native substrate proteins and provides a physical environment optimized to promote and accelerate protein folding. This is Chaperonin GroEL from Clostridium botulinum (strain 657 / Type Ba4).